The sequence spans 360 residues: Glutamate 5-kinase (360 aa).

An ATP-binding site is contributed by K7. S47, D134, and N146 together coordinate substrate. ATP-binding positions include T166–D167 and T210–K216. The region spanning V275–S348 is the PUA domain.

This sequence belongs to the glutamate 5-kinase family.

The protein resides in the cytoplasm. The catalysed reaction is L-glutamate + ATP = L-glutamyl 5-phosphate + ADP. It functions in the pathway amino-acid biosynthesis; L-proline biosynthesis; L-glutamate 5-semialdehyde from L-glutamate: step 1/2. In terms of biological role, catalyzes the transfer of a phosphate group to glutamate to form L-glutamate 5-phosphate. The polypeptide is Glutamate 5-kinase (Prochlorococcus marinus subsp. pastoris (strain CCMP1986 / NIES-2087 / MED4)).